We begin with the raw amino-acid sequence, 230 residues long: Sugar fermentation stimulation protein homolog (230 aa).

This sequence belongs to the SfsA family.

The chain is Sugar fermentation stimulation protein homolog from Clostridium perfringens (strain ATCC 13124 / DSM 756 / JCM 1290 / NCIMB 6125 / NCTC 8237 / Type A).